The primary structure comprises 632 residues: MAU2 chromatid cohesion factor homolog (632 aa).

TPR repeat units lie at residues glycine 453 to glutamate 486 and serine 493 to isoleucine 526.

The protein belongs to the SCC4/mau-2 family. Interacts with Nipped-B to form the cohesin loading complex.

The protein resides in the nucleus. The protein localises to the nucleoplasm. Required for association of the cohesin complex with chromatin during interphase. Plays a role in sister chromatid cohesion and normal progression through prometaphase. The polypeptide is MAU2 chromatid cohesion factor homolog (Drosophila melanogaster (Fruit fly)).